Here is a 237-residue protein sequence, read N- to C-terminus: Oil body-associated protein 2C (237 aa).

Belongs to the OBAP family.

In Arabidopsis thaliana (Mouse-ear cress), this protein is Oil body-associated protein 2C.